We begin with the raw amino-acid sequence, 261 residues long: Phosphatidylglycerol--prolipoprotein diacylglyceryl transferase (261 aa).

The next 4 helical transmembrane spans lie at 17 to 37 (FGIHWYGLMYLIGFLAFLWLG), 60 to 80 (ALFYGALGVILGGRLGYALFY), 92 to 112 (ILFLWQGGMSFHGGFLGVMVA), and 121 to 141 (GLTFFGIMDFVAPLVPVGLGA). Arg-143 lines the a 1,2-diacyl-sn-glycero-3-phospho-(1'-sn-glycerol) pocket. The next 3 membrane-spanning stretches (helical) occupy residues 175-195 (PSQLYEFLLEGVALFILLWWY), 203-223 (GSVSALFLIGYGSFRFLVEFT), and 237-257 (LSMGQWLSLPMVIAGVWLLIV).

This sequence belongs to the Lgt family.

The protein localises to the cell inner membrane. The catalysed reaction is L-cysteinyl-[prolipoprotein] + a 1,2-diacyl-sn-glycero-3-phospho-(1'-sn-glycerol) = an S-1,2-diacyl-sn-glyceryl-L-cysteinyl-[prolipoprotein] + sn-glycerol 1-phosphate + H(+). It functions in the pathway protein modification; lipoprotein biosynthesis (diacylglyceryl transfer). Catalyzes the transfer of the diacylglyceryl group from phosphatidylglycerol to the sulfhydryl group of the N-terminal cysteine of a prolipoprotein, the first step in the formation of mature lipoproteins. The protein is Phosphatidylglycerol--prolipoprotein diacylglyceryl transferase of Methylobacillus flagellatus (strain ATCC 51484 / DSM 6875 / VKM B-1610 / KT).